The primary structure comprises 200 residues: LIM domain-containing protein WLIM2a (200 aa).

2 consecutive LIM zinc-binding domains span residues 8 to 68 (QKCR…LFKE) and 107 to 167 (DKCA…LFKE).

In terms of assembly, interacts with F-actin. Expressed in roots, leaves, stems, flowers and siliques. Barely detected in pollen.

It localises to the cytoplasm. Its subcellular location is the cytoskeleton. Its function is as follows. Binds to actin filaments and promotes cross-linking into thick bundles. Has an actin-stabilizing activity. The actin regulatory activities are not regulated by pH and [Ca(2+)]. In Arabidopsis thaliana (Mouse-ear cress), this protein is LIM domain-containing protein WLIM2a.